The sequence spans 601 residues: Glutathione-regulated potassium-efflux system protein KefB (601 aa).

13 consecutive transmembrane segments (helical) span residues 4 to 24 (SDFL…VPLA), 29 to 49 (IGAV…GLGF), 55 to 75 (EILH…GLEL), 87 to 107 (IFGV…GLLM), 115 to 135 (AAVV…LQLM), 152 to 172 (VLLF…LLAG), 177 to 197 (HFDW…LIGG), 207 to 227 (FIAA…LVLG), 230 to 250 (LFMD…GVLL), 268 to 288 (GLLL…GVLY), 291 to 311 (LLWV…VLYL), 324 to 344 (MQFA…FSTA), and 356 to 376 (ALLL…MKLV). Residues 400–519 (KPQVIVVGFG…AGVTQFSRET (120 aa)) form the RCK N-terminal domain.

Belongs to the monovalent cation:proton antiporter 2 (CPA2) transporter (TC 2.A.37) family. KefB subfamily. As to quaternary structure, interacts with the regulatory subunit KefG.

The protein resides in the cell inner membrane. Functionally, pore-forming subunit of a potassium efflux system that confers protection against electrophiles. Catalyzes K(+)/H(+) antiport. This chain is Glutathione-regulated potassium-efflux system protein KefB, found in Escherichia coli O81 (strain ED1a).